A 118-amino-acid chain; its full sequence is Large ribosomal subunit protein uL24 (118 aa).

Belongs to the universal ribosomal protein uL24 family. In terms of assembly, part of the 50S ribosomal subunit.

One of two assembly initiator proteins, it binds directly to the 5'-end of the 23S rRNA, where it nucleates assembly of the 50S subunit. Its function is as follows. One of the proteins that surrounds the polypeptide exit tunnel on the outside of the subunit. In Prochlorococcus marinus (strain MIT 9303), this protein is Large ribosomal subunit protein uL24.